Reading from the N-terminus, the 331-residue chain is NADH-quinone oxidoreductase subunit H (331 aa).

8 helical membrane passes run 7–27, 81–101, 114–134, 154–174, 187–207, 238–258, 271–291, and 310–330; these read ALVT…AVVI, MIFT…FAIV, IGIL…LFAG, ISYE…VGSF, VWFI…GVAV, FFVG…TLFF, WLSF…FILI, and VCLP…LAAA.

This sequence belongs to the complex I subunit 1 family. NDH-1 is composed of 13 different subunits. Subunits NuoA, H, J, K, L, M, N constitute the membrane sector of the complex.

The protein resides in the cell inner membrane. The catalysed reaction is a quinone + NADH + 5 H(+)(in) = a quinol + NAD(+) + 4 H(+)(out). NDH-1 shuttles electrons from NADH, via FMN and iron-sulfur (Fe-S) centers, to quinones in the respiratory chain. The immediate electron acceptor for the enzyme in this species is believed to be ubiquinone. Couples the redox reaction to proton translocation (for every two electrons transferred, four hydrogen ions are translocated across the cytoplasmic membrane), and thus conserves the redox energy in a proton gradient. This subunit may bind ubiquinone. The polypeptide is NADH-quinone oxidoreductase subunit H (Pseudomonas aeruginosa (strain ATCC 15692 / DSM 22644 / CIP 104116 / JCM 14847 / LMG 12228 / 1C / PRS 101 / PAO1)).